The following is a 222-amino-acid chain: Ribosomal RNA small subunit methyltransferase G (222 aa).

S-adenosyl-L-methionine-binding positions include glycine 73, leucine 78, 124–125 (AE), and arginine 137.

This sequence belongs to the methyltransferase superfamily. RNA methyltransferase RsmG family.

It localises to the cytoplasm. Functionally, specifically methylates the N7 position of guanine in position 518 of 16S rRNA. This is Ribosomal RNA small subunit methyltransferase G from Acidothermus cellulolyticus (strain ATCC 43068 / DSM 8971 / 11B).